A 166-amino-acid chain; its full sequence is NADH-quinone oxidoreductase subunit I (166 aa).

2 consecutive 4Fe-4S ferredoxin-type domains span residues 57 to 87 and 97 to 126; these read LRRYPNGEERCIACKLCEAVCPALAITIESE and TRYDIDMFKCINCGLCEESCPVDSIVVTPI. Cys-67, Cys-70, Cys-73, Cys-77, Cys-106, Cys-109, Cys-112, and Cys-116 together coordinate [4Fe-4S] cluster.

This sequence belongs to the complex I 23 kDa subunit family. As to quaternary structure, NDH-1 is composed of 14 different subunits. Subunits NuoA, H, J, K, L, M, N constitute the membrane sector of the complex. The cofactor is [4Fe-4S] cluster.

It localises to the cell inner membrane. It catalyses the reaction a quinone + NADH + 5 H(+)(in) = a quinol + NAD(+) + 4 H(+)(out). Functionally, NDH-1 shuttles electrons from NADH, via FMN and iron-sulfur (Fe-S) centers, to quinones in the respiratory chain. The immediate electron acceptor for the enzyme in this species is believed to be ubiquinone. Couples the redox reaction to proton translocation (for every two electrons transferred, four hydrogen ions are translocated across the cytoplasmic membrane), and thus conserves the redox energy in a proton gradient. The protein is NADH-quinone oxidoreductase subunit I of Legionella pneumophila (strain Lens).